The following is a 629-amino-acid chain: MQTYDAGTFDVIVVGAGHAGVEAGLASGRMGAKTLMLTINLDMVAFMPCNPSVGGPAKGVVVREIDALGGEMGRNTDKTYIQMRMLNTGKGPAVRALRAQADKWDYQHEMKHTIEKEENITLRQGLVDRLVIEDGVCKGVITNSGAIYYAKTVVITTGTFSRGEIIVGELRYSSGPNNQQPSVKLSEHLEELGFELRRFKTGTPPRVKSSTIDYSKTEEQPGDDHPRAFSFDTVEMMLEQLPCWLTYTNETTHEIIQANLHRSPMFTATKKGTGARYCPSIEDKIVRFSDKPRHQIFLEPEGKNTEEVYVQGLSTSLPEEVQREMLRTIPGLENVEMMRVGYAIEYDAVMPDQLWPSLETKLVEGLFTAGQINGTSGYEEAAGQGLMAGINAARKVFEKEPVILGRDQAYIGVLIDDLVTKGTEEPYRLLTSRAEYRLLLRHDNADLRLTEIGHEIGLISDERYERFLAKQRAIEAEKERLQKTRIKPTAEVQAMLKEIGSGELKDGILAADLLRRPEITYDKIAQIVSRETFVTDEIAEQVEIQIKYEGYIQKSNLQVEKMKRMEDKKIPENIDYDAISGLATEALEKLKKIEPLSIAQASRISGVNPADISILLVYIEQGKIAKVSK.

FAD contacts are provided by residues 15–20, Val-127, and Ser-182; that span reads GAGHAG. Positions 203–226 are disordered; that stretch reads TPPRVKSSTIDYSKTEEQPGDDHP. The segment covering 215 to 226 has biased composition (basic and acidic residues); the sequence is SKTEEQPGDDHP. 274 to 288 is a binding site for NAD(+); sequence GARYCPSIEDKIVRF. An FAD-binding site is contributed by Gln-371.

Belongs to the MnmG family. In terms of assembly, homodimer. Heterotetramer of two MnmE and two MnmG subunits. The cofactor is FAD.

Its subcellular location is the cytoplasm. Its function is as follows. NAD-binding protein involved in the addition of a carboxymethylaminomethyl (cmnm) group at the wobble position (U34) of certain tRNAs, forming tRNA-cmnm(5)s(2)U34. The chain is tRNA uridine 5-carboxymethylaminomethyl modification enzyme MnmG from Listeria innocua serovar 6a (strain ATCC BAA-680 / CLIP 11262).